Here is a 418-residue protein sequence, read N- to C-terminus: uncharacterized protein (418 aa).

Disordered regions lie at residues 123–174 (KVKD…DSDK), 209–231 (FDKEEKEREKEKEKEKEKEEKEE), 258–302 (KDDN…DEEL), and 344–418 (KDAD…YFKK). Basic and acidic residues predominate over residues 136 to 154 (NKKDKKDKNKQNEEDHLII). Positions 156–170 (DVIDEEIQEKEDNES) are enriched in acidic residues. The span at 209–227 (FDKEEKEREKEKEKEKEKE) shows a compositional bias: basic and acidic residues. A compositionally biased stretch (low complexity) spans 266-293 (NQNQNQNQNNNNNNNNNNNNNNNNNNNN). Positions 344-356 (KDADDSDDFDEFN) are enriched in acidic residues. Positions 359–374 (DTESQLSKSKQKSPNV) are enriched in polar residues. Residues 375–390 (KKTTTTTTTSTSTSSR) show a composition bias toward low complexity. Residues 391 to 401 (KQSKSKLKPKS) show a composition bias toward basic residues.

This is an uncharacterized protein from Dictyostelium discoideum (Social amoeba).